We begin with the raw amino-acid sequence, 198 residues long: Uracil phosphoribosyltransferase homolog (198 aa).

The protein belongs to the UPRTase family.

Its subcellular location is the plastid. It is found in the chloroplast. This Pyropia yezoensis (Susabi-nori) protein is Uracil phosphoribosyltransferase homolog.